Reading from the N-terminus, the 144-residue chain is Large ribosomal subunit protein uL15 (144 aa).

The interval methionine 1–lysine 58 is disordered. A compositionally biased stretch (gly residues) spans arginine 21–alanine 31.

Belongs to the universal ribosomal protein uL15 family. As to quaternary structure, part of the 50S ribosomal subunit.

Functionally, binds to the 23S rRNA. The chain is Large ribosomal subunit protein uL15 from Psychromonas ingrahamii (strain DSM 17664 / CCUG 51855 / 37).